The primary structure comprises 293 residues: MTDSTRSLRNCLAPAKLNLFLHITGRRPNGYHDLQSVFQLLNWGDTLHFTRRDDGRVARVTDVPGVPEESDLVVRAANLLKAHTDTAHGVDIEIDKILPMGAGLGGGSSDAATTLLALNRLWQLDLPRAELQSLAVKLGADVPFFIFGKNAFAEGIGEELAEVELPTRWFLVVTPRVHVPTAEIFSDELLTRDTKPVTIADFLAQQTSDAEWPDSFGRNDMQEVVTRKYAEVAQVVKWLYDVTPARMTGSGASVFAAFHSKHEAEAAKAKLPASWNGAVAESLNEHPLFAFAS.

Lysine 16 is a catalytic residue. 99-109 lines the ATP pocket; that stretch reads PMGAGLGGGSS. Aspartate 141 is a catalytic residue.

Belongs to the GHMP kinase family. IspE subfamily.

It catalyses the reaction 4-CDP-2-C-methyl-D-erythritol + ATP = 4-CDP-2-C-methyl-D-erythritol 2-phosphate + ADP + H(+). It functions in the pathway isoprenoid biosynthesis; isopentenyl diphosphate biosynthesis via DXP pathway; isopentenyl diphosphate from 1-deoxy-D-xylulose 5-phosphate: step 3/6. In terms of biological role, catalyzes the phosphorylation of the position 2 hydroxy group of 4-diphosphocytidyl-2C-methyl-D-erythritol. The polypeptide is 4-diphosphocytidyl-2-C-methyl-D-erythritol kinase (Burkholderia cenocepacia (strain HI2424)).